The sequence spans 528 residues: MMWWFLLIGLASAAATASSASSASFESRCQHFHKEIHLQNVHVLSTTYVPIGSNIPMVYNPPICGGTASSSISTIQFCQVALNVTTSDKSQFFMEAWLPSNYTGRFLSTGNGGLNGCVSYADMVYATQYGFATIGTNNGHFGDTGQYFLNNPEVIEDFAYRALHTGTVVGKALTKLFYPQGYKNSYYLGCSTGGRQGWKSIQRFPDDFDGVVAGAPAINFVNLCSWGSRFLKITGPPGSETFVTSAQWSAVHNEILRQCDALDGAVDGIIEDTDLCQPVFETLLCNSTAVDKTSCLTGVQANTVNEVFSAMYGLDGKWLYPRMQPGSELAASFIYYSGNGFKYSDDWYKYVVYNDSNWGHSTWTLADAAAAAAQDPFQISSFDGNISGFQKAGGKVLHYHGLEDAIITSDSSKAYYKHVADTMGLSPSELDHFYRLFPISGMGHCSPGTGAASIGQGSSTYAGDDPQDNVLMAIVQWVEKGIAPEYVRGSKMSRDGTIDYRRKHCKYPKRNRYVGPGKYTDENAWKCV.

The first 19 residues, 1–19, serve as a signal peptide directing secretion; sequence MMWWFLLIGLASAAATASS. Intrachain disulfides connect Cys-29–Cys-78, Cys-64–Cys-117, Cys-190–Cys-445, Cys-259–Cys-276, Cys-285–Cys-295, and Cys-505–Cys-527. N-linked (GlcNAc...) asparagine glycans are attached at residues Asn-83 and Asn-101. Ser-191 functions as the Acyl-ester intermediate in the catalytic mechanism. Positions 260, 263, 265, 267, and 269 each coordinate Ca(2+). Residues Asn-286, Asn-354, and Asn-385 are each glycosylated (N-linked (GlcNAc...) asparagine). Residues Asp-404 and His-444 each act as charge relay system in the active site.

The protein belongs to the tannase family.

The protein localises to the secreted. It catalyses the reaction feruloyl-polysaccharide + H2O = ferulate + polysaccharide.. Functionally, involved in degradation of plant cell walls. Hydrolyzes the feruloyl-arabinose ester bond in arabinoxylans as well as the feruloyl-galactose and feruloyl-arabinose ester bonds in pectin. This Aspergillus fumigatus (strain ATCC MYA-4609 / CBS 101355 / FGSC A1100 / Af293) (Neosartorya fumigata) protein is Probable feruloyl esterase B-1 (faeB-1).